Reading from the N-terminus, the 120-residue chain is Large ribosomal subunit protein uL18 (120 aa).

It belongs to the universal ribosomal protein uL18 family. As to quaternary structure, part of the 50S ribosomal subunit; part of the 5S rRNA/L5/L18/L25 subcomplex. Contacts the 5S and 23S rRNAs.

Its function is as follows. This is one of the proteins that bind and probably mediate the attachment of the 5S RNA into the large ribosomal subunit, where it forms part of the central protuberance. This chain is Large ribosomal subunit protein uL18, found in Nitrobacter winogradskyi (strain ATCC 25391 / DSM 10237 / CIP 104748 / NCIMB 11846 / Nb-255).